Consider the following 421-residue polypeptide: Dihydroorotase (421 aa).

Residues His59 and His61 each contribute to the Zn(2+) site. Substrate-binding positions include 61 to 63 and Asn93; that span reads HLR. Residues Asp150, His177, and His230 each contribute to the Zn(2+) site. Asn276 contributes to the substrate binding site. Asp303 is a Zn(2+) binding site. The active site involves Asp303. His307 contacts substrate.

It belongs to the metallo-dependent hydrolases superfamily. DHOase family. Class I DHOase subfamily. The cofactor is Zn(2+).

The catalysed reaction is (S)-dihydroorotate + H2O = N-carbamoyl-L-aspartate + H(+). It functions in the pathway pyrimidine metabolism; UMP biosynthesis via de novo pathway; (S)-dihydroorotate from bicarbonate: step 3/3. In terms of biological role, catalyzes the reversible cyclization of carbamoyl aspartate to dihydroorotate. This Desulfotalea psychrophila (strain LSv54 / DSM 12343) protein is Dihydroorotase.